Reading from the N-terminus, the 250-residue chain is Ribosomal RNA small subunit methyltransferase J (250 aa).

Residues 101–102 (RD), 117–118 (ER), 153–154 (SS), and Asp171 contribute to the S-adenosyl-L-methionine site.

This sequence belongs to the methyltransferase superfamily. RsmJ family.

Its subcellular location is the cytoplasm. The enzyme catalyses guanosine(1516) in 16S rRNA + S-adenosyl-L-methionine = N(2)-methylguanosine(1516) in 16S rRNA + S-adenosyl-L-homocysteine + H(+). Functionally, specifically methylates the guanosine in position 1516 of 16S rRNA. This chain is Ribosomal RNA small subunit methyltransferase J, found in Escherichia fergusonii (strain ATCC 35469 / DSM 13698 / CCUG 18766 / IAM 14443 / JCM 21226 / LMG 7866 / NBRC 102419 / NCTC 12128 / CDC 0568-73).